A 179-amino-acid chain; its full sequence is Large ribosomal subunit protein uL5 (179 aa).

The protein belongs to the universal ribosomal protein uL5 family. In terms of assembly, part of the 50S ribosomal subunit; part of the 5S rRNA/L5/L18/L25 subcomplex. Contacts the 5S rRNA and the P site tRNA. Forms a bridge to the 30S subunit in the 70S ribosome.

Functionally, this is one of the proteins that bind and probably mediate the attachment of the 5S RNA into the large ribosomal subunit, where it forms part of the central protuberance. In the 70S ribosome it contacts protein S13 of the 30S subunit (bridge B1b), connecting the 2 subunits; this bridge is implicated in subunit movement. Contacts the P site tRNA; the 5S rRNA and some of its associated proteins might help stabilize positioning of ribosome-bound tRNAs. In Dictyoglomus turgidum (strain DSM 6724 / Z-1310), this protein is Large ribosomal subunit protein uL5.